A 367-amino-acid chain; its full sequence is Phosphoribosylformylglycinamidine cyclo-ligase (367 aa).

It belongs to the AIR synthase family.

Its subcellular location is the cytoplasm. The enzyme catalyses 2-formamido-N(1)-(5-O-phospho-beta-D-ribosyl)acetamidine + ATP = 5-amino-1-(5-phospho-beta-D-ribosyl)imidazole + ADP + phosphate + H(+). It functions in the pathway purine metabolism; IMP biosynthesis via de novo pathway; 5-amino-1-(5-phospho-D-ribosyl)imidazole from N(2)-formyl-N(1)-(5-phospho-D-ribosyl)glycinamide: step 2/2. The sequence is that of Phosphoribosylformylglycinamidine cyclo-ligase from Cyanothece sp. (strain PCC 7425 / ATCC 29141).